A 196-amino-acid polypeptide reads, in one-letter code: ATP-dependent Clp protease proteolytic subunit (196 aa).

The Nucleophile role is filled by Ser-98. The active site involves His-123.

It belongs to the peptidase S14 family. Fourteen ClpP subunits assemble into 2 heptameric rings which stack back to back to give a disk-like structure with a central cavity, resembling the structure of eukaryotic proteasomes.

Its subcellular location is the cytoplasm. The catalysed reaction is Hydrolysis of proteins to small peptides in the presence of ATP and magnesium. alpha-casein is the usual test substrate. In the absence of ATP, only oligopeptides shorter than five residues are hydrolyzed (such as succinyl-Leu-Tyr-|-NHMec, and Leu-Tyr-Leu-|-Tyr-Trp, in which cleavage of the -Tyr-|-Leu- and -Tyr-|-Trp bonds also occurs).. Cleaves peptides in various proteins in a process that requires ATP hydrolysis. Has a chymotrypsin-like activity. Plays a major role in the degradation of misfolded proteins. ClpXP is involved in the complete degradation of the Site-2 clipped anti-sigma-W factor RsiW. This results in the release of SigW and the transcription activation of the genes under the control of the sigma-W factor. The polypeptide is ATP-dependent Clp protease proteolytic subunit (Geobacillus kaustophilus (strain HTA426)).